The following is a 306-amino-acid chain: Homeobox protein CUP9 (306 aa).

The segment at 75–123 (PAINSGGTSTTATPTASTVETSKTSSSAMDTQSQYGSSKKSKSASDDAK) is disordered. Low complexity predominate over residues 79-96 (SGGTSTTATPTASTVETS). Residues 97–110 (KTSSSAMDTQSQYG) are compositionally biased toward polar residues. A DNA-binding region (homeobox; TALE-type) is located at residues 162–224 (NSGRRSNLPK…NVRRRKIFSD (63 aa)).

It belongs to the TALE/CUP9 homeobox family.

It is found in the nucleus. Functionally, probable DNA-binding protein which plays a role in protecting yeast cells against copper toxicity. May regulate the expression of important copper homeostatic genes. This chain is Homeobox protein CUP9 (CUP9), found in Saccharomyces cerevisiae (strain ATCC 204508 / S288c) (Baker's yeast).